Consider the following 1175-residue polypeptide: Atrophin-1 (1175 aa).

Disordered stretches follow at residues 1–595 (MKTR…VTTS), 608–752 (SSPA…ARFN), and 770–847 (VPLE…HRPP). The short motif at 16–32 (RKKEAPGPREELRSRGR) is the Nuclear localization signal element. Residues 17 to 29 (KKEAPGPREELRS) are compositionally biased toward basic and acidic residues. At Ser34 the chain carries Phosphoserine. The span at 45-63 (GKAEKSRQTAKKARIEEPS) shows a compositional bias: basic and acidic residues. Phosphoserine is present on residues Ser77, Ser79, Ser101, Ser103, and Ser107. Over residues 108–128 (LDGRSINDDGSSDPRDIDQDN) the composition is skewed to basic and acidic residues. Polar residues predominate over residues 129-152 (RSTSPSIYSPGSVENDSDSSSGLS). 2 stretches are compositionally biased toward pro residues: residues 158-174 (PYHP…PPDS) and 208-217 (GPPPGAPPTH). Low complexity-rich tracts occupy residues 240 to 253 (GAAA…SGGK) and 262 to 273 (IPISSSGASGAP). Residues 345–374 (PPGPEKGPTLAPSPHPLPPASSSAPGPPMR) show a composition bias toward pro residues. The segment covering 378-396 (SSSSSSAAASSSSSSSSAS) has biased composition (low complexity). Residues 416 to 437 (SMSVSNQPPKYTQPSLPSQAVW) show a composition bias toward polar residues. The span at 476–491 (THHHHQQQPQQQHHHG) shows a compositional bias: basic residues. An involved in binding BAIAP2 region spans residues 503–553 (HPLESSNSHHAHPYNMSPSLGSLRPYPPGPAHLPPPHGQVSYNQAGPNGPP). Residues 527-539 (PYPPGPAHLPPPH) show a composition bias toward pro residues. A compositionally biased stretch (low complexity) spans 547-584 (AGPNGPPVSSSNSSGSSSQASYSCSHPSSSQGPQGASY). Phosphoserine is present on Ser617. Position 626 is an N6-acetyllysine (Lys626). Position 638 is a phosphothreonine (Thr638). Ser646 carries the post-translational modification Phosphoserine. A Phosphothreonine modification is found at Thr654. 2 stretches are compositionally biased toward pro residues: residues 693-703 (LPPPPAAPTTG) and 722-737 (PESP…PPPK). Residue Ser724 is modified to Phosphoserine; by MAPK8. Ser731 and Ser733 each carry phosphoserine. Over residues 780 to 824 (KRADLVEKVRREAEQRAREEKEREREREREKEREREKERELERSV) the composition is skewed to basic and acidic residues. The tract at residues 864-879 (DTPALRTLSEYARPHV) is required for interaction with FAT1. Ser881 bears the Phosphoserine mark. Residues 913-932 (PAAREREREARERDLRDRLK) are disordered. The span at 914-932 (AAREREREARERDLRDRLK) shows a compositional bias: basic and acidic residues. The short motif at 1018–1026 (ALGNDPLAR) is the Nuclear export signal element. Arg1100 carries the asymmetric dimethylarginine modification. Residue Lys1168 forms a Glycyl lysine isopeptide (Lys-Gly) (interchain with G-Cter in SUMO2) linkage.

In terms of assembly, interacts with BAIAP2, WWP1, WWP2, WWP3 and RERE. Interacts (via its N-terminus) with MTG8; the interaction enhances transcriptional repression of MTG8. Interacts with PQBP1. Interacts with NR2E1; the interaction represses the transcriptional activity of NR2E1. Interacts with FAT1 (via a C-terminal domain). Phosphorylated in vitro by MAPK8/JNK1 on Ser-724. Widely expressed. Most abundant in the brain.

It localises to the cytoplasm. Its subcellular location is the perinuclear region. It is found in the cell junction. The protein localises to the nucleus. In terms of biological role, transcriptional corepressor. Corepressor of MTG8 transcriptional repression. Has some intrinsic repression activity which is independent of the number of the poly-Q repeats. Recruits NR2E1 to repress transcription. Promotes vascular smooth cell (VSMC) migration and orientation. The sequence is that of Atrophin-1 (Atn1) from Mus musculus (Mouse).